The chain runs to 376 residues: Fructose-1,6-bisphosphate aldolase/phosphatase (376 aa).

The active-site Proton acceptor; for FBP phosphatase activity is the D11. D11, H18, D49, and D50 together coordinate Mg(2+). H18 is a binding site for beta-D-fructose 1,6-bisphosphate. H18 is a dihydroxyacetone phosphate binding site. Position 87 (Y87) interacts with beta-D-fructose 1,6-bisphosphate. Q91 is a Mg(2+) binding site. 100 to 101 contacts beta-D-fructose 1,6-bisphosphate; the sequence is GN. Mg(2+) is bound at residue D128. K129 provides a ligand contact to beta-D-fructose 1,6-bisphosphate. K129 contributes to the dihydroxyacetone phosphate binding site. Y224 serves as the catalytic Proton donor/acceptor; for FBP aldolase activity. Mg(2+) is bound by residues K227, D228, and D229. K227 serves as the catalytic Schiff-base intermediate with DHAP; for FBP aldolase activity. Residues 237-238, R261, and Y342 each bind beta-D-fructose 1,6-bisphosphate; that span reads QK. R261 lines the dihydroxyacetone phosphate pocket. Residues 357 to 376 are disordered; sequence MVPLKDSGPAGTGRAYEDPD.

The protein belongs to the FBP aldolase/phosphatase family. As to quaternary structure, homooctamer; dimer of tetramers. Requires Mg(2+) as cofactor.

The catalysed reaction is beta-D-fructose 1,6-bisphosphate + H2O = beta-D-fructose 6-phosphate + phosphate. The enzyme catalyses beta-D-fructose 1,6-bisphosphate = D-glyceraldehyde 3-phosphate + dihydroxyacetone phosphate. It participates in carbohydrate biosynthesis; gluconeogenesis. In terms of biological role, catalyzes two subsequent steps in gluconeogenesis: the aldol condensation of dihydroxyacetone phosphate (DHAP) and glyceraldehyde-3-phosphate (GA3P) to fructose-1,6-bisphosphate (FBP), and the dephosphorylation of FBP to fructose-6-phosphate (F6P). The protein is Fructose-1,6-bisphosphate aldolase/phosphatase of Cenarchaeum symbiosum (strain A).